The following is a 518-amino-acid chain: Glutamate--cysteine ligase (518 aa).

Belongs to the glutamate--cysteine ligase type 1 family. Type 1 subfamily.

The catalysed reaction is L-cysteine + L-glutamate + ATP = gamma-L-glutamyl-L-cysteine + ADP + phosphate + H(+). It functions in the pathway sulfur metabolism; glutathione biosynthesis; glutathione from L-cysteine and L-glutamate: step 1/2. This is Glutamate--cysteine ligase (gshA) from Buchnera aphidicola subsp. Acyrthosiphon pisum (strain APS) (Acyrthosiphon pisum symbiotic bacterium).